The primary structure comprises 1150 residues: C5a peptidase (1150 aa).

The signal sequence occupies residues 1-31; that stretch reads MRKKQKLPFDKLAIALMSTSILLNAQSDIKA. The interval 33–73 is disordered; it reads TVTEDTPAAEQAVETPQPTAVSEEVPSSKETKTPQTPDNAE. Residues 99–581 enclose the Peptidase S8 domain; the sequence is KATIRDLNDP…AGAVDAKKAS (483 aa). Catalysis depends on charge relay system residues D130, H193, and S512. Composition is skewed to basic and acidic residues over residues 1029 to 1054 and 1061 to 1073; these read EGHS…KPEQ and PDKK…EKDS. Residues 1029-1116 form a disordered region; sequence EGHSNKPEQD…RDQLPTTNDK (88 aa). Repeat copies occupy residues 1034 to 1050, 1051 to 1067, and 1068 to 1084. Residues 1034-1084 form a 3 X 17 AA tandem repeats region; sequence KPEQDGSDQAPDKKPEAKPEQDGSGQTPDKKPETKPEKDSSGQTPGKTPQK. Polar residues predominate over residues 1075-1089; it reads GQTPGKTPQKGQPSR. The short motif at 1110-1114 is the LPXTG sorting signal element; it reads LPTTN. Pentaglycyl murein peptidoglycan amidated threonine is present on T1113. The propeptide at 1114–1150 is removed by sortase; that stretch reads NDKDTNRLHLLKLVMTTFFFGLVAHIFKTKRQKETKK.

This sequence belongs to the peptidase S8 family. Post-translationally, cleaved by SpeB protease; leading to its degradation. Degradation by SpeB is probably strictly regulated to preserve integrity of C5a peptidase.

Its subcellular location is the secreted. The protein resides in the cell wall. It carries out the reaction The primary cleavage site is at 67-His-|-Lys-68 in human C5a with a minor secondary cleavage site at 58-Ala-|-Ser-59.. In terms of biological role, this virulence factor of S.pyogenes specifically cleaves the human serum chemotaxin C5a at '68-Lys-|-Asp-69' bond near its C-terminus, destroying its ability to serve as a chemoattractant. The sequence is that of C5a peptidase (scpA) from Streptococcus pyogenes serotype M18 (strain MGAS8232).